A 546-amino-acid polypeptide reads, in one-letter code: MDIPVELRDYSKRRESEEAVANEGNSDDDGNEYLSGLRLTYLFLALILCMLLAVIDLTITATAVPHITDEFHSLNDIGWYASVFFMTVASSQSSWGKIYRYFDLKNMFLLAMGIFELGNVICGAAPTSNALIVGRAITGIGAAGVIAGCFTVAAFAVRPSKRPAFTGGLAATYGVGSSIGPIIGGVLSDRVSWRWCFYINLPIGGFAAIVLFLFFKSPAHSRNEADHRASWREKMLQMDFPGFFCCIAAVTCLLLALLWGGTTKSWNSSDVIGTLVGFFLFTALFAVVEWKSGERAMVVPRIMKQRVVLFGTIGGFFAGGAQFVLVYYVPIYFQAILGTSAQDSGVRNLPYIIGSTITTIVAGTTISATGYFTPLIVGGGALWTVSAGLIYTWSPTTTTGQWIGYQALAGLAVGLCYQPPILAAQALAAPTDVAATSAILLFFQTMGGAFMVSAAQTAFSNGLIHKLVQYSPGTDVQAVIATGLQELRVRYTGAELEAIIQSYMDGLKISFAIIIALTGASTVAGIFMPWKSFKTIQAEKNVENSD.

7 helical membrane-spanning segments follow: residues 39-59, 77-96, 107-127, 137-157, 167-187, 195-215, and 240-260; these read LTYL…DLTI, IGWY…SSWG, MFLL…AAPT, ITGI…AFAV, GGLA…GGVL, WCFY…FLFF, and FPGF…LLWG. An N-linked (GlcNAc...) asparagine glycan is attached at N267. Helical transmembrane passes span 270-290, 307-327, 349-369, 370-390, 402-422, 433-453, and 509-529; these read DVIG…VVEW, VVLF…VLVY, LPYI…ISAT, GYFT…AGLI, WIGY…PPIL, VAAT…FMVS, and ISFA…IFMP.

Belongs to the major facilitator superfamily.

The protein resides in the cell membrane. It functions in the pathway secondary metabolite biosynthesis. In terms of biological role, MFS-type transporter; part of the gene cluster that mediates the biosynthesis of dibenzodioxocinones such as pestalotiollide B, a novel class of inhibitors against cholesterol ester transfer protein (CEPT). essential for dibenzodioxocinones biosynthesis and may be involved in the secretion of the cluster products. The chain is MFS-type transporter GME11371 from Pestalotiopsis microspora.